The primary structure comprises 136 residues: Large ribosomal subunit protein uL22 (136 aa).

It belongs to the universal ribosomal protein uL22 family. Part of the 50S ribosomal subunit.

Its function is as follows. This protein binds specifically to 23S rRNA; its binding is stimulated by other ribosomal proteins, e.g. L4, L17, and L20. It is important during the early stages of 50S assembly. It makes multiple contacts with different domains of the 23S rRNA in the assembled 50S subunit and ribosome. The globular domain of the protein is located near the polypeptide exit tunnel on the outside of the subunit, while an extended beta-hairpin is found that lines the wall of the exit tunnel in the center of the 70S ribosome. This Parabacteroides distasonis (strain ATCC 8503 / DSM 20701 / CIP 104284 / JCM 5825 / NCTC 11152) protein is Large ribosomal subunit protein uL22.